Here is a 584-residue protein sequence, read N- to C-terminus: Phosphoinositide phospholipase C 7 (584 aa).

The EF-hand-like domain occupies 26-102 (EIKTLFDNYS…NSPLSSLEVH (77 aa)). Residues 103–248 (QDMDAPLSHY…LKKRIMISTK (146 aa)) form the PI-PLC X-box domain. Active-site residues include histidine 118 and histidine 164. The segment at 285-318 (DRSVDKNDSNGDDDDDDDDDDDDDDGDDKIKKNA) is disordered. Position 287 is a phosphoserine (serine 287). The span at 294–311 (NGDDDDDDDDDDDDDDGD) shows a compositional bias: acidic residues. The PI-PLC Y-box domain occupies 323 to 439 (KHLIAIEAGK…GYIKKPDLLL (117 aa)). The C2 domain maps to 433–566 (KKPDLLLKSN…QGIRAVPLRN (134 aa)).

Ca(2+) serves as cofactor. Expressed in leaves, roots, flowers and siliques.

Its subcellular location is the cell membrane. The catalysed reaction is a 1,2-diacyl-sn-glycero-3-phospho-(1D-myo-inositol-4,5-bisphosphate) + H2O = 1D-myo-inositol 1,4,5-trisphosphate + a 1,2-diacyl-sn-glycerol + H(+). The production of the second messenger molecules diacylglycerol (DAG) and inositol 1,4,5-trisphosphate (IP3) is mediated by activated phosphatidylinositol-specific phospholipase C enzymes. The sequence is that of Phosphoinositide phospholipase C 7 (PLC7) from Arabidopsis thaliana (Mouse-ear cress).